Consider the following 579-residue polypeptide: MENLKQLQERVAVSDGREKADLVIKNGRIVNVFSGEIMEGDIAIKNGYIAGIGDFSEAEQIMDAAGEFIVPGFIDAHVHVESAMVTPAEFARVLLPNGVTTIVTDPHEIANVAGEKGIEFMLEDAKGAPLDMFVMLPSSVPATEGEHNGETLHAKKLHPLYKHEKVIGLAEVMDFPSVAKGSSDILTKIIDAKKEGGRIDGHGAGLTSADLNNYLAVGIRTDHESTNAKEAVDRLRAGMFVMLREGTVGRDLLQTISAVSEKNSHRFCFCTDDKLINDLITEGSINYNIRLAIENNIDPITAIQMATINAANCHNLPYLGAVAAGYQADIVFLKDLQTIEISKVLKNGQVVVENGARNEAAFEKKHSETFISPKIQHHLSKQDLELPLTNDTCYVIGMKQNNLFTEKLMEQVNVENGKFVPSIEKDLLKMAVVERHHNTGCVGVGIVKGFGLKEGAIATTVAHDSHNIVAVGASDEAMEKAINYVTEMGGGIAVVDETGKVLHDLALPVAGLLSNKPYEEVERDLAGLLKAFNQISNAKGFDPFLTLSFLTLPVIPELKLTDQGLFDFATFQIIPNEVN.

Belongs to the metallo-dependent hydrolases superfamily. Adenine deaminase family. It depends on Mn(2+) as a cofactor.

It carries out the reaction adenine + H2O + H(+) = hypoxanthine + NH4(+). The sequence is that of Adenine deaminase from Listeria welshimeri serovar 6b (strain ATCC 35897 / DSM 20650 / CCUG 15529 / CIP 8149 / NCTC 11857 / SLCC 5334 / V8).